The following is a 2197-amino-acid chain: Protein sickie (2197 aa).

A Calponin-homology (CH) domain is found at 21 to 129 (RDYAEIYTDW…LFFALSRFKQ (109 aa)). Disordered regions lie at residues 165–197 (GLRTPGSSLNQDKNQQEQQQQQQQQQTPQQLAQ), 235–311 (CPPD…PQKH), 331–646 (AASV…NKFH), 730–767 (GSSPGGSRFHDIDNGYLSEGSSGLNGPSSSAGGISPGK), 788–910 (RNSR…FGYV), 1094–1119 (GPGQMAGQMSGNESPYVQSPRMNRSN), and 1202–1223 (TAAGASVLSPTHGTTSAAGLVG). Over residues 175-197 (QDKNQQEQQQQQQQQQTPQQLAQ) the composition is skewed to low complexity. Polar residues predominate over residues 261–290 (SDFNTSRPNSPPTSNHTIQSLKSGNNNSLR). Positions 291 to 304 (PPSIKSGIPSPSSP) are enriched in low complexity. Polar residues predominate over residues 331–341 (AASVASKTQIQ). Low complexity-rich tracts occupy residues 342–354 (SKRTSSSSGFSSA) and 379–398 (SVSSQKPQPKTKQSKLLAAQ). Positions 399–428 (QKKEQANKATKLDKKEKSPARSLNKEESGN) are enriched in basic and acidic residues. Polar residues-rich tracts occupy residues 429 to 441 (ESRSSTMGRTGKS), 561 to 570 (ANSQPTSHIS), 577 to 588 (EPSTPQHSSGIY), and 633 to 644 (SAPNTPTASPNK). Composition is skewed to low complexity over residues 755–766 (GPSSSAGGISPG), 796–831 (SIGTAANGSSAASQASSSGGSTTTHAQNNNNNNNNN), and 887–904 (SSSKQGSPSSSSRTKGVP). The segment covering 1100-1119 (GQMSGNESPYVQSPRMNRSN) has biased composition (polar residues). A coiled-coil region spans residues 1262-1342 (YGNAEERQAH…RQTIELLRKQ (81 aa)). 2 disordered regions span residues 1373–1415 (QALG…SMCS) and 1455–1511 (KTSR…SPAK). 2 stretches are compositionally biased toward polar residues: residues 1379-1399 (GSDQKPPNSGSQRAINANNGS) and 1406-1415 (RQHSTDSMCS). The segment covering 1455–1468 (KTSRHVGHHHHHNH) has biased composition (basic residues). Residues 1556–1591 (SSASQLESLKEMMNKMRAEMMSLKHNNERLQKLVTT) are a coiled coil. Disordered stretches follow at residues 1600–1633 (SLGQAISPNGSVAGSSEVSRRYSLADSNSRPPME), 1648–1690 (CLPP…EAAP), and 2172–2197 (SEAQDQESDCASLDSNVTPESSAGAE). Positions 1603–1616 (QAISPNGSVAGSSE) are enriched in polar residues. Pro residues predominate over residues 1650-1663 (PPAPAPEQPPPPAP). The segment covering 2184 to 2197 (LDSNVTPESSAGAE) has biased composition (polar residues).

It belongs to the Nav/unc-53 family.

In terms of biological role, required for the immune deficiency pathway, which mediates responses to Gram-negative bacterial infection. Favors Rel activation and nuclear translocation. This is Protein sickie (sick) from Drosophila melanogaster (Fruit fly).